A 588-amino-acid polypeptide reads, in one-letter code: Actin-histidine N-methyltransferase (588 aa).

The disordered stretch occupies residues 1-25; that stretch reads MGKKSRVKTQKSGTGATASVSPKET. The segment covering 10–25 has biased composition (polar residues); sequence QKSGTGATASVSPKET. Residues Arg-75, 104–106, Arg-254, 275–279, and 325–327 contribute to the S-adenosyl-L-methionine site; these read EGF, DMCNH, and SGF. The 221-residue stretch at 94–314 folds into the SET domain; sequence EGFEMVNFKE…AGEQIYIFYG (221 aa). The tract at residues 546 to 588 is disordered; sequence VNGENSIPNGTRSGKENFNQEGSERATEGTKESSSDSTAGARE. Polar residues predominate over residues 548–566; the sequence is GENSIPNGTRSGKENFNQE. Over residues 567–579 the composition is skewed to basic and acidic residues; sequence GSERATEGTKESS.

This sequence belongs to the class V-like SAM-binding methyltransferase superfamily. SETD3 actin-histidine methyltransferase family. In terms of assembly, interacts with MYOD1. In terms of processing, phosphorylated by GSK3B, which is required for recognition by the SCF(FBXW7) complex and subsequent degradation. Post-translationally, ubiquitinated by the SCF(FBXW7) complex following phosphorylation by GSK3B, leading to its degradation by the proteasome.

Its subcellular location is the cytoplasm. The protein localises to the nucleus. The enzyme catalyses L-histidyl-[protein] + S-adenosyl-L-methionine = N(tele)-methyl-L-histidyl-[protein] + S-adenosyl-L-homocysteine + H(+). Protein-histidine N-methyltransferase that specifically mediates 3-methylhistidine (tele-methylhistidine) methylation of actin at 'His-73'. Histidine methylation of actin is required for smooth muscle contraction of the laboring uterus during delivery. Does not have protein-lysine N-methyltransferase activity and probably only catalyzes histidine methylation of actin. The polypeptide is Actin-histidine N-methyltransferase (Canis lupus familiaris (Dog)).